The primary structure comprises 191 residues: MITITDAAQSHFAKLLANQEEGTQIRVFVINPGTPTAECGVSYCPPDAVEATDTELKFEQLSAYVDELSVPYLQDAEIDFVTDQLGSQLTLKAPNAKMRKVDDSAPLMERVEYVLQSQINPQLAGHGGRVTLMEITPEGLAILQFGGGCNGCSMVDVTLKEGIEKELLQKFPELKGVRDLTEHQRGEHSYY.

Residues C149 and C152 each contribute to the [4Fe-4S] cluster site.

It belongs to the NfuA family. Homodimer. It depends on [4Fe-4S] cluster as a cofactor.

Involved in iron-sulfur cluster biogenesis. Binds a 4Fe-4S cluster, can transfer this cluster to apoproteins, and thereby intervenes in the maturation of Fe/S proteins. Could also act as a scaffold/chaperone for damaged Fe/S proteins. This chain is Fe/S biogenesis protein NfuA, found in Yersinia pseudotuberculosis serotype O:1b (strain IP 31758).